A 96-amino-acid polypeptide reads, in one-letter code: UPF0235 protein Ent638_3359 (96 aa).

This sequence belongs to the UPF0235 family.

This chain is UPF0235 protein Ent638_3359, found in Enterobacter sp. (strain 638).